The primary structure comprises 379 residues: Glutamate 5-kinase (379 aa).

Lys-8 contributes to the ATP binding site. 3 residues coordinate substrate: Ser-49, Asp-136, and Asn-148. ATP-binding positions include 168-169 and 211-217; these read TD and TGGMATK. The PUA domain maps to 276–354; it reads MGKIYLDAGA…ERIASLLGYM (79 aa).

It belongs to the glutamate 5-kinase family.

The protein localises to the cytoplasm. It carries out the reaction L-glutamate + ATP = L-glutamyl 5-phosphate + ADP. It functions in the pathway amino-acid biosynthesis; L-proline biosynthesis; L-glutamate 5-semialdehyde from L-glutamate: step 1/2. Functionally, catalyzes the transfer of a phosphate group to glutamate to form L-glutamate 5-phosphate. In Microcystis aeruginosa (strain NIES-843 / IAM M-2473), this protein is Glutamate 5-kinase.